The chain runs to 300 residues: uncharacterized protein (300 aa).

The Periplasmic portion of the chain corresponds to 1 to 7; sequence MGSTRKG. Residues 8-28 form a helical membrane-spanning segment; that stretch reads MLNVLIAAVLWGSSGVCAQYI. The 130-residue stretch at 16–145 folds into the EamA 1 domain; it reads VLWGSSGVCA…SLIGTFLLVT (130 aa). At 29–45 the chain is on the cytoplasmic side; sequence MEQSRMSSQFLTMIRLL. A helical transmembrane segment spans residues 46–66; the sequence is FAGLILVTFSFMHGDKIFSIL. At 67-71 the chain is on the periplasmic side; sequence KNRKD. The helical transmembrane segment at 72 to 92 threads the bilayer; it reads ALSLLIFSVVGALTVQLTFLL. Residues 93–99 are Cytoplasmic-facing; that stretch reads TIEKSNA. The helical transmembrane segment at 100 to 120 threads the bilayer; the sequence is ATATVLQFLSPTIIVAWFALA. At 121 to 124 the chain is on the periplasmic side; that stretch reads RRTR. The chain crosses the membrane as a helical span at residues 125–145; the sequence is PGILVLTAILTSLIGTFLLVT. The Cytoplasmic portion of the chain corresponds to 146–151; sequence HGNPTS. The chain crosses the membrane as a helical span at residues 152-172; that stretch reads LSISSAALFWGIASAFAAAFY. In terms of domain architecture, EamA 2 spans 167–291; the sequence is FAAAFYTTWP…ILSSVILISL (125 aa). The Periplasmic portion of the chain corresponds to 173 to 184; sequence TTWPSRLIAQYG. Residues 185–205 form a helical membrane-spanning segment; sequence TLPVVGWSMSFGGLILLPFYA. Residues 206–216 are Cytoplasmic-facing; it reads KEGTHFAVSGS. A helical membrane pass occupies residues 217–237; sequence LILAFFYLVVIGTSLTFSLYL. The Periplasmic segment spans residues 238 to 263; the sequence is KGAQLIGGPKASILSCAEPLSSALLS. A helical transmembrane segment spans residues 264–284; that stretch reads LLLLGISFTLPDWLGTLLILS. Residues 285 to 300 lie on the Cytoplasmic side of the membrane; sequence SVILISLDSRRRARAA.

Belongs to the EamA transporter family.

The protein localises to the cell inner membrane. This is an uncharacterized protein from Salmonella typhimurium (strain LT2 / SGSC1412 / ATCC 700720).